We begin with the raw amino-acid sequence, 134 residues long: Small ribosomal subunit protein uS8c (134 aa).

It belongs to the universal ribosomal protein uS8 family. Part of the 30S ribosomal subunit.

It localises to the plastid. The protein resides in the chloroplast. Functionally, one of the primary rRNA binding proteins, it binds directly to 16S rRNA central domain where it helps coordinate assembly of the platform of the 30S subunit. This is Small ribosomal subunit protein uS8c (rps8) from Bigelowiella natans (Pedinomonas minutissima).